The primary structure comprises 158 residues: SsrA-binding protein (158 aa).

This sequence belongs to the SmpB family.

The protein resides in the cytoplasm. Functionally, required for rescue of stalled ribosomes mediated by trans-translation. Binds to transfer-messenger RNA (tmRNA), required for stable association of tmRNA with ribosomes. tmRNA and SmpB together mimic tRNA shape, replacing the anticodon stem-loop with SmpB. tmRNA is encoded by the ssrA gene; the 2 termini fold to resemble tRNA(Ala) and it encodes a 'tag peptide', a short internal open reading frame. During trans-translation Ala-aminoacylated tmRNA acts like a tRNA, entering the A-site of stalled ribosomes, displacing the stalled mRNA. The ribosome then switches to translate the ORF on the tmRNA; the nascent peptide is terminated with the 'tag peptide' encoded by the tmRNA and targeted for degradation. The ribosome is freed to recommence translation, which seems to be the essential function of trans-translation. The sequence is that of SsrA-binding protein from Caldicellulosiruptor bescii (strain ATCC BAA-1888 / DSM 6725 / KCTC 15123 / Z-1320) (Anaerocellum thermophilum).